A 474-amino-acid polypeptide reads, in one-letter code: Phenylalanine--tRNA ligase alpha subunit (474 aa).

Residues threonine 317, 356-358, and tyrosine 396 each bind L-phenylalanine; that span reads QLE. Glutamate 398 provides a ligand contact to Mg(2+). Position 421 (phenylalanine 421) interacts with L-phenylalanine.

This sequence belongs to the class-II aminoacyl-tRNA synthetase family. Phe-tRNA synthetase alpha subunit type 2 subfamily. As to quaternary structure, tetramer of two alpha and two beta subunits. Mg(2+) serves as cofactor.

It is found in the cytoplasm. The enzyme catalyses tRNA(Phe) + L-phenylalanine + ATP = L-phenylalanyl-tRNA(Phe) + AMP + diphosphate + H(+). The sequence is that of Phenylalanine--tRNA ligase alpha subunit from Methanocorpusculum labreanum (strain ATCC 43576 / DSM 4855 / Z).